Here is a 135-residue protein sequence, read N- to C-terminus: Histone H2B.4 (135 aa).

Basic and acidic residues-rich tracts occupy residues 1–12 (MAPKAAEKKPVE) and 23–35 (EKKV…GGEK). Residues 1–43 (MAPKAAEKKPVEKTPAVKKPKAEKKVPTSKEGGEKKGKKKSKK) are disordered. Lys8 and Lys24 each carry N6-acetyllysine. Residue Lys131 forms a Glycyl lysine isopeptide (Lys-Gly) (interchain with G-Cter in ubiquitin) linkage.

This sequence belongs to the histone H2B family. The nucleosome is a histone octamer containing two molecules each of H2A, H2B, H3 and H4 assembled in one H3-H4 heterotetramer and two H2A-H2B heterodimers. The octamer wraps approximately 147 bp of DNA. In terms of processing, can be acetylated to form H2BK6ac and H2BK33ac. Monoubiquitinated to form H2BK143ub1; may give a specific tag for epigenetic transcriptional activation. Expressed preferentially in meristematic tissues.

It localises to the nucleus. Its subcellular location is the chromosome. Its function is as follows. Core component of nucleosome. Nucleosomes wrap and compact DNA into chromatin, limiting DNA accessibility to the cellular machineries which require DNA as a template. Histones thereby play a central role in transcription regulation, DNA repair, DNA replication and chromosomal stability. DNA accessibility is regulated via a complex set of post-translational modifications of histones, also called histone code, and nucleosome remodeling. This Triticum aestivum (Wheat) protein is Histone H2B.4 (TH153).